The primary structure comprises 440 residues: GTPase Der (440 aa).

EngA-type G domains are found at residues 3–168 (PIIA…GKMD) and 177–353 (LKLA…EEYT). Residues 9–16 (GRPNVGKS), 56–60 (DTGGL), 119–122 (NKID), 183–190 (GKPNAGKS), 230–234 (DTAGI), and 295–298 (NKWD) each bind GTP. Residues 354–438 (KRISTGLLNT…PIMISFENKS (85 aa)) enclose the KH-like domain.

It belongs to the TRAFAC class TrmE-Era-EngA-EngB-Septin-like GTPase superfamily. EngA (Der) GTPase family. In terms of assembly, associates with the 50S ribosomal subunit.

GTPase that plays an essential role in the late steps of ribosome biogenesis. This is GTPase Der from Fusobacterium nucleatum subsp. nucleatum (strain ATCC 25586 / DSM 15643 / BCRC 10681 / CIP 101130 / JCM 8532 / KCTC 2640 / LMG 13131 / VPI 4355).